Reading from the N-terminus, the 100-residue chain is Urease subunit gamma (100 aa).

This sequence belongs to the urease gamma subunit family. Heterotrimer of UreA (gamma), UreB (beta) and UreC (alpha) subunits. Three heterotrimers associate to form the active enzyme.

It is found in the cytoplasm. The enzyme catalyses urea + 2 H2O + H(+) = hydrogencarbonate + 2 NH4(+). Its pathway is nitrogen metabolism; urea degradation; CO(2) and NH(3) from urea (urease route): step 1/1. In Burkholderia cenocepacia (strain ATCC BAA-245 / DSM 16553 / LMG 16656 / NCTC 13227 / J2315 / CF5610) (Burkholderia cepacia (strain J2315)), this protein is Urease subunit gamma.